A 122-amino-acid polypeptide reads, in one-letter code: Ribosome-binding factor A (122 aa).

The protein belongs to the RbfA family. In terms of assembly, monomer. Binds 30S ribosomal subunits, but not 50S ribosomal subunits or 70S ribosomes.

It localises to the cytoplasm. Functionally, one of several proteins that assist in the late maturation steps of the functional core of the 30S ribosomal subunit. Associates with free 30S ribosomal subunits (but not with 30S subunits that are part of 70S ribosomes or polysomes). Required for efficient processing of 16S rRNA. May interact with the 5'-terminal helix region of 16S rRNA. In Geotalea uraniireducens (strain Rf4) (Geobacter uraniireducens), this protein is Ribosome-binding factor A.